We begin with the raw amino-acid sequence, 232 residues long: 5'-methylthioadenosine/S-adenosylhomocysteine nucleosidase (232 aa).

Glu-12 acts as the Proton acceptor in catalysis. Residues Gly-78, Met-153, and 174-175 (ME) each bind substrate. Asp-198 acts as the Proton donor in catalysis.

It belongs to the PNP/UDP phosphorylase family. MtnN subfamily.

The enzyme catalyses S-adenosyl-L-homocysteine + H2O = S-(5-deoxy-D-ribos-5-yl)-L-homocysteine + adenine. It carries out the reaction S-methyl-5'-thioadenosine + H2O = 5-(methylsulfanyl)-D-ribose + adenine. It catalyses the reaction 5'-deoxyadenosine + H2O = 5-deoxy-D-ribose + adenine. The protein operates within amino-acid biosynthesis; L-methionine biosynthesis via salvage pathway; S-methyl-5-thio-alpha-D-ribose 1-phosphate from S-methyl-5'-thioadenosine (hydrolase route): step 1/2. Catalyzes the irreversible cleavage of the glycosidic bond in both 5'-methylthioadenosine (MTA) and S-adenosylhomocysteine (SAH/AdoHcy) to adenine and the corresponding thioribose, 5'-methylthioribose and S-ribosylhomocysteine, respectively. Also cleaves 5'-deoxyadenosine, a toxic by-product of radical S-adenosylmethionine (SAM) enzymes, into 5-deoxyribose and adenine. This is 5'-methylthioadenosine/S-adenosylhomocysteine nucleosidase from Hydrogenovibrio crunogenus (strain DSM 25203 / XCL-2) (Thiomicrospira crunogena).